The primary structure comprises 395 residues: L-rhamnonate dehydratase (395 aa).

Residues His23 and Arg49 each coordinate substrate. The Mg(2+) site is built by Asp215, Glu241, and Glu269. His319 functions as the Proton acceptor in the catalytic mechanism. Position 339 (Glu339) interacts with substrate.

This sequence belongs to the mandelate racemase/muconate lactonizing enzyme family. RhamD subfamily. Homooctamer; tetramer of dimers. The cofactor is Mg(2+).

It carries out the reaction L-rhamnonate = 2-dehydro-3-deoxy-L-rhamnonate + H2O. In terms of biological role, catalyzes the dehydration of L-rhamnonate to 2-keto-3-deoxy-L-rhamnonate (KDR). The protein is L-rhamnonate dehydratase of Delftia acidovorans (strain DSM 14801 / SPH-1).